Here is a 337-residue protein sequence, read N- to C-terminus: Nicotinate-nucleotide--dimethylbenzimidazole phosphoribosyltransferase (337 aa).

Glu305 (proton acceptor) is an active-site residue.

The protein belongs to the CobT family.

It carries out the reaction 5,6-dimethylbenzimidazole + nicotinate beta-D-ribonucleotide = alpha-ribazole 5'-phosphate + nicotinate + H(+). Its pathway is nucleoside biosynthesis; alpha-ribazole biosynthesis; alpha-ribazole from 5,6-dimethylbenzimidazole: step 1/2. Catalyzes the synthesis of alpha-ribazole-5'-phosphate from nicotinate mononucleotide (NAMN) and 5,6-dimethylbenzimidazole (DMB). The sequence is that of Nicotinate-nucleotide--dimethylbenzimidazole phosphoribosyltransferase from Jannaschia sp. (strain CCS1).